Consider the following 119-residue polypeptide: Holo-[acyl-carrier-protein] synthase (119 aa).

Residues Asp8 and Glu58 each contribute to the Mg(2+) site.

Belongs to the P-Pant transferase superfamily. AcpS family. Mg(2+) is required as a cofactor.

It is found in the cytoplasm. The enzyme catalyses apo-[ACP] + CoA = holo-[ACP] + adenosine 3',5'-bisphosphate + H(+). Transfers the 4'-phosphopantetheine moiety from coenzyme A to a Ser of acyl-carrier-protein. This Bacillus cereus (strain G9842) protein is Holo-[acyl-carrier-protein] synthase.